Here is a 223-residue protein sequence, read N- to C-terminus: MIGRIAGVILHRAQDHVLIDVRGVGYIVHVSERTAANLPPAGQATALYTELLVREDLLQLFGFPTLLEKEWHRLLTSVQGVGAKVALAILGTLGPDGLSRALALGDWSALRKAPGVGPKLAQRVVMELKDKAPAVMALGGALTVDPGPLPEVELVEAAVPAPVPAKAAPSSAQATADALSALGNLGYAPSEAASAVAEAAAREPAAPTAALIRAALRLLAPKE.

The tract at residues 1–64 (MIGRIAGVIL…EDLLQLFGFP (64 aa)) is domain I. The tract at residues 65–143 (TLLEKEWHRL…AVMALGGALT (79 aa)) is domain II. Residues 144-169 (VDPGPLPEVELVEAAVPAPVPAKAAP) form a flexible linker region. Positions 170 to 223 (SSAQATADALSALGNLGYAPSEAASAVAEAAAREPAAPTAALIRAALRLLAPKE) are domain III.

This sequence belongs to the RuvA family. Homotetramer. Forms an RuvA(8)-RuvB(12)-Holliday junction (HJ) complex. HJ DNA is sandwiched between 2 RuvA tetramers; dsDNA enters through RuvA and exits via RuvB. An RuvB hexamer assembles on each DNA strand where it exits the tetramer. Each RuvB hexamer is contacted by two RuvA subunits (via domain III) on 2 adjacent RuvB subunits; this complex drives branch migration. In the full resolvosome a probable DNA-RuvA(4)-RuvB(12)-RuvC(2) complex forms which resolves the HJ.

The protein localises to the cytoplasm. The RuvA-RuvB-RuvC complex processes Holliday junction (HJ) DNA during genetic recombination and DNA repair, while the RuvA-RuvB complex plays an important role in the rescue of blocked DNA replication forks via replication fork reversal (RFR). RuvA specifically binds to HJ cruciform DNA, conferring on it an open structure. The RuvB hexamer acts as an ATP-dependent pump, pulling dsDNA into and through the RuvAB complex. HJ branch migration allows RuvC to scan DNA until it finds its consensus sequence, where it cleaves and resolves the cruciform DNA. This Paracoccus denitrificans (strain Pd 1222) protein is Holliday junction branch migration complex subunit RuvA.